We begin with the raw amino-acid sequence, 287 residues long: Mitochondrial glycine transporter A (287 aa).

3 Solcar repeats span residues 7 to 97 (HPAV…LKQR), 104 to 188 (PGPL…TKHL), and 198 to 282 (YAPV…LMAQ). A run of 6 helical transmembrane segments spans residues 13–38 (FMCGSLSGTCSTLLFQPLDLVKTRLQ), 72–98 (GVSPSFVRCIPGVGIYFSTYFTLKQRY), 110–135 (VLLGAGARCVAGVFMLPVTVIKTRFE), 163–186 (GLMATLLRDAPFSGIYVMIYSQTK), 202–228 (ANFSCGVLAGVLASVLTQPADVVKTHI), and 257–275 (GAVPRSLRRTMMAAMAWTV).

The protein belongs to the mitochondrial carrier (TC 2.A.29) family. SLC25A38 subfamily. As to expression, at 24 hours post-fertilization, expressed predominantly in posterior blood island, posterior cardinal vein and circulating blood, as well as in somites, brain and retina. At 34 hours post-fertilization, becomes restricted to posterior blood island and circulating blood.

It is found in the mitochondrion inner membrane. The catalysed reaction is glycine(in) = glycine(out). Functionally, mitochondrial glycine transporter that imports glycine into the mitochondrial matrix. Plays an important role in providing glycine for the first enzymatic step in heme biosynthesis, the condensation of glycine with succinyl-CoA to produce 5-aminolevulinate (ALA) in the mitochondrial matrix. Required during erythropoiesis. May play a role as pro-apoptotic protein that induces caspase-dependent apoptosis. This is Mitochondrial glycine transporter A (slc25a38a) from Danio rerio (Zebrafish).